A 565-amino-acid polypeptide reads, in one-letter code: CTP synthase (565 aa).

An amidoligase domain region spans residues 1–272 (MARPKNVKHI…DLRVMKKLGL (272 aa)). Serine 18 is a binding site for CTP. UTP is bound at residue serine 18. 19-24 (SLGKGI) contacts ATP. Tyrosine 59 is an L-glutamine binding site. Position 76 (aspartate 76) interacts with ATP. The Mg(2+) site is built by aspartate 76 and glutamate 146. CTP is bound by residues 153-155 (DIE), 193-198 (KTKPTQ), and lysine 229. Residues 193–198 (KTKPTQ) and lysine 229 contribute to the UTP site. One can recognise a Glutamine amidotransferase type-1 domain in the interval 299–543 (TIGVCGKYTE…VAAAKEYEKG (245 aa)). Position 363 (glycine 363) interacts with L-glutamine. Cysteine 390 functions as the Nucleophile; for glutamine hydrolysis in the catalytic mechanism. Residues 391 to 394 (LGMQ), glutamate 414, and arginine 471 each bind L-glutamine. Active-site residues include histidine 516 and glutamate 518.

Belongs to the CTP synthase family. In terms of assembly, homotetramer.

It carries out the reaction UTP + L-glutamine + ATP + H2O = CTP + L-glutamate + ADP + phosphate + 2 H(+). It catalyses the reaction L-glutamine + H2O = L-glutamate + NH4(+). The enzyme catalyses UTP + NH4(+) + ATP = CTP + ADP + phosphate + 2 H(+). Its pathway is pyrimidine metabolism; CTP biosynthesis via de novo pathway; CTP from UDP: step 2/2. With respect to regulation, allosterically activated by GTP, when glutamine is the substrate; GTP has no effect on the reaction when ammonia is the substrate. The allosteric effector GTP functions by stabilizing the protein conformation that binds the tetrahedral intermediate(s) formed during glutamine hydrolysis. Inhibited by the product CTP, via allosteric rather than competitive inhibition. In terms of biological role, catalyzes the ATP-dependent amination of UTP to CTP with either L-glutamine or ammonia as the source of nitrogen. Regulates intracellular CTP levels through interactions with the four ribonucleotide triphosphates. This is CTP synthase from Chlorobium phaeobacteroides (strain DSM 266 / SMG 266 / 2430).